The sequence spans 92 residues: Transcription factor PRE1 (92 aa).

One can recognise a bHLH domain in the interval Arg4 to Leu59.

Interacts with IBH1 and HFR1. Expressed in roots, leaves, stems and flowers.

It localises to the nucleus. Functionally, atypical and probable non DNA-binding bHLH transcription factor that integrates multiple signaling pathways to regulate cell elongation and plant development. Binds IBH1, forming a pair of antagonistic bHLH transcription factors that function downstream of BZR1 to mediate brassinosteroid regulation of cell elongation. Regulates light responses by binding and inhibiting the activity of the bHLH transcription factor HFR1, a critical regulator of light signaling and shade avoidance. May have a regulatory role in various aspects of gibberellin-dependent growth and development. This Arabidopsis thaliana (Mouse-ear cress) protein is Transcription factor PRE1 (PRE1).